A 461-amino-acid chain; its full sequence is Protein naked cuticle homolog 2 (461 aa).

Residues 1–106 are disordered; sequence MGKFQSKHAA…DGEKAASREG (106 aa). Residue G2 is the site of N-myristoyl glycine attachment. 2 stretches are compositionally biased toward basic and acidic residues: residues 34 to 73 and 97 to 106; these read RGAEETDRRAGSGVEHRSRDKQELLNGDPKEGPFWDDKGS and DGEKAASREG. The interval 121–186 is interaction with DVL1, DVL2 and DVL3; it reads QCDVSVEEDN…LRVKLTVSPE (66 aa). The EF-hand domain occupies 127–162; the sequence is EEDNRQEWTFTLYDFDNSGKVTREDMSSLMHTIYEV. The Ca(2+) site is built by D140, D142, S144, K146, and D151. Disordered regions lie at residues 176–205, 263–302, 321–359, 372–414, and 441–461; these read TLRVKLTVSPEPSSKKECPLTGQDREPTRG, YTSKFGPGSPPEQARQEHHGRATHIPSRSRSQESDAHAIH, TRALAAQPRIKGQEKQFLRSPKGPGKPLGTPGSGKPGKA, SAQD…GQPT, and HEHHHHHEHHHHHHHHHFHPS. The segment covering 188–205 has biased composition (basic and acidic residues); it reads SSKKECPLTGQDREPTRG. Residues 307 to 396 are interaction with TGFA; it reads QVLAEHVIPA…PPQPYGHKRY (90 aa). The span at 341–350 shows a compositional bias: low complexity; the sequence is PKGPGKPLGT. The segment covering 380-390 has biased composition (pro residues); sequence PQPPPQPPPQP.

Belongs to the NKD family. Interacts with RNF25, TGFA (via cytoplasmic domain), and PPP2R3A. Interacts with DVL1, DVL2 and DVL3. Post-translationally, ubiquitinated, leading to rapid proteasomal degradation. Interaction with TGFA interferes with RNF25 binding and protects against ubiquitination mediated by RNF25. In terms of tissue distribution, expressed in the cecum, colon, esophagus, ileum, jejunum, skin and stomach.

The protein localises to the cell membrane. Its subcellular location is the cytoplasm. It localises to the cytoplasmic vesicle. In terms of biological role, cell autonomous antagonist of the canonical Wnt signaling pathway. May activate a second Wnt signaling pathway that controls planar cell polarity. Required for processing of TGFA and for targeting of TGFA to the basolateral membrane of polarized epithelial cells. In Mus musculus (Mouse), this protein is Protein naked cuticle homolog 2 (Nkd2).